A 451-amino-acid chain; its full sequence is Acetylornithine aminotransferase, mitochondrial (451 aa).

An N6-(pyridoxal phosphate)lysine modification is found at Lys-302.

Belongs to the class-III pyridoxal-phosphate-dependent aminotransferase family. Pyridoxal 5'-phosphate serves as cofactor. As to expression, found at highest levels in nodules, confined to the infected cells.

Its subcellular location is the mitochondrion. It carries out the reaction N(2)-acetyl-L-ornithine + 2-oxoglutarate = N-acetyl-L-glutamate 5-semialdehyde + L-glutamate. It functions in the pathway amino-acid biosynthesis; L-arginine biosynthesis; N(2)-acetyl-L-ornithine from L-glutamate: step 4/4. In terms of biological role, involved in the biosynthesis of citrulline. The chain is Acetylornithine aminotransferase, mitochondrial (AG118) from Alnus glutinosa (European alder).